Here is a 90-residue protein sequence, read N- to C-terminus: Probable Fe(2+)-trafficking protein (90 aa).

The protein belongs to the Fe(2+)-trafficking protein family. As to quaternary structure, monomer.

Functionally, could be a mediator in iron transactions between iron acquisition and iron-requiring processes, such as synthesis and/or repair of Fe-S clusters in biosynthetic enzymes. In Yersinia pestis bv. Antiqua (strain Antiqua), this protein is Probable Fe(2+)-trafficking protein.